The chain runs to 65 residues: Beta-defensin 106A (65 aa).

An N-terminal signal peptide occupies residues 1–20 (MRTFLFLFAVLFFLTPAKNE). Intrachain disulfides connect Cys26-Cys53, Cys33-Cys47, and Cys37-Cys54.

This sequence belongs to the beta-defensin family. As to quaternary structure, monomer. Interacts with CCR2 (via extracellular N-terminal region); this interaction may preferentially require specific tyrosine sulfation on CCR2.

It is found in the secreted. Its subcellular location is the membrane. Has antibacterial activity. Acts as a ligand for C-C chemokine receptor CCR2. This chain is Beta-defensin 106A (DEFB106A), found in Pongo pygmaeus (Bornean orangutan).